Consider the following 189-residue polypeptide: Probable nicotinate-nucleotide adenylyltransferase (189 aa).

It belongs to the NadD family.

The catalysed reaction is nicotinate beta-D-ribonucleotide + ATP + H(+) = deamido-NAD(+) + diphosphate. The protein operates within cofactor biosynthesis; NAD(+) biosynthesis; deamido-NAD(+) from nicotinate D-ribonucleotide: step 1/1. In terms of biological role, catalyzes the reversible adenylation of nicotinate mononucleotide (NaMN) to nicotinic acid adenine dinucleotide (NaAD). The protein is Probable nicotinate-nucleotide adenylyltransferase of Bacillus cytotoxicus (strain DSM 22905 / CIP 110041 / 391-98 / NVH 391-98).